Reading from the N-terminus, the 119-residue chain is Holo-[acyl-carrier-protein] synthase (119 aa).

Mg(2+)-binding residues include Asp-5 and Glu-51.

Belongs to the P-Pant transferase superfamily. AcpS family. Requires Mg(2+) as cofactor.

The protein localises to the cytoplasm. The catalysed reaction is apo-[ACP] + CoA = holo-[ACP] + adenosine 3',5'-bisphosphate + H(+). Functionally, transfers the 4'-phosphopantetheine moiety from coenzyme A to a Ser of acyl-carrier-protein. This Helicobacter pylori (strain HPAG1) protein is Holo-[acyl-carrier-protein] synthase.